The following is a 180-amino-acid chain: MSRIGRLPIAVPSGVEVKLDGQYVEVKGPKGTLNFTVREPITVSKNDEGAILVERPDDERENRSLHGLTRTLINNMVIGVTEGYEKKLEIQGVGYRVLSKGPKQLEFNLGFSHPVIVDAPEGITFAVENPTKFSVQGIDKQVVGETAANIRKIRKPEPYKGKGVRYEGENVRRKVGKAGK.

Belongs to the universal ribosomal protein uL6 family. In terms of assembly, part of the 50S ribosomal subunit.

This protein binds to the 23S rRNA, and is important in its secondary structure. It is located near the subunit interface in the base of the L7/L12 stalk, and near the tRNA binding site of the peptidyltransferase center. The polypeptide is Large ribosomal subunit protein uL6 (Cutibacterium acnes (strain DSM 16379 / KPA171202) (Propionibacterium acnes)).